Reading from the N-terminus, the 396-residue chain is Trypacidin cluster transcription factor (396 aa).

The segment at residues 20–47 is a DNA-binding region (zn(2)-C6 fungal-type); it reads CRACGLSKVRCSKEKPTCSRCRRRGTVC. Disordered regions lie at residues 54 to 120, 190 to 218, and 346 to 365; these read RPGR…LSTV, DPAP…ESEA, and MHGA…PAPL. Basic and acidic residues predominate over residues 57–71; that stretch reads RKPDSRSEVEPEPGH. Residues 72 to 82 show a composition bias toward low complexity; it reads LSHPLPSPESS.

As to expression, specifically expressed in conidia.

The protein resides in the nucleus. Its function is as follows. Transcription factor that regulates the expression of the gene clusters that mediate the biosynthesis of trypacidin, a metabolite with antiprotozoal activity and a possible role in the infection process. Trypacidin is toxic for human pulmonary and bronchial epithelial cells by initiating the intracellular formation of nitric oxide (NO) and hydrogen peroxide (H(2)O(2)), thus triggering host necrotic cell death. The sequence is that of Trypacidin cluster transcription factor from Aspergillus fumigatus (strain ATCC MYA-4609 / CBS 101355 / FGSC A1100 / Af293) (Neosartorya fumigata).